The following is a 250-amino-acid chain: Orotidine 5'-phosphate decarboxylase (250 aa).

Substrate-binding positions include aspartate 9, lysine 40, 67 to 76, threonine 132, arginine 190, glutamine 204, glycine 224, and arginine 225; that span reads DLKFHDIPNT. Lysine 69 functions as the Proton donor in the catalytic mechanism.

Belongs to the OMP decarboxylase family. Type 1 subfamily. As to quaternary structure, homodimer.

It catalyses the reaction orotidine 5'-phosphate + H(+) = UMP + CO2. It functions in the pathway pyrimidine metabolism; UMP biosynthesis via de novo pathway; UMP from orotate: step 2/2. Catalyzes the decarboxylation of orotidine 5'-monophosphate (OMP) to uridine 5'-monophosphate (UMP). The chain is Orotidine 5'-phosphate decarboxylase from Nitratidesulfovibrio vulgaris (strain DSM 19637 / Miyazaki F) (Desulfovibrio vulgaris).